A 239-amino-acid chain; its full sequence is Immunoglobulin superfamily member 23 (239 aa).

The disordered stretch occupies residues 63-93 (ELEAQPPTSSSPKGLPGRPRTSQEVPNAEDN). Residues 94-179 (PSLIPLVTFP…ELVSEPVTVS (86 aa)) enclose the Ig-like domain. A helical membrane pass occupies residues 214–234 (LIVAATIGGLVLIGSVCFYIL).

It localises to the cell membrane. May be involved in osteoclast differentiation. This is Immunoglobulin superfamily member 23 from Mus musculus (Mouse).